Reading from the N-terminus, the 329-residue chain is Tyrosine--tRNA ligase (329 aa).

Positions 31, 157, 161, 164, and 179 each coordinate L-tyrosine. Positions 220–224 match the 'KMSKS' region motif; it reads KMSKS. Lys-223 provides a ligand contact to ATP.

It belongs to the class-I aminoacyl-tRNA synthetase family. TyrS type 4 subfamily. As to quaternary structure, homodimer.

The protein localises to the cytoplasm. It catalyses the reaction tRNA(Tyr) + L-tyrosine + ATP = L-tyrosyl-tRNA(Tyr) + AMP + diphosphate + H(+). Its function is as follows. Catalyzes the attachment of tyrosine to tRNA(Tyr) in a two-step reaction: tyrosine is first activated by ATP to form Tyr-AMP and then transferred to the acceptor end of tRNA(Tyr). This Picrophilus torridus (strain ATCC 700027 / DSM 9790 / JCM 10055 / NBRC 100828 / KAW 2/3) protein is Tyrosine--tRNA ligase.